The chain runs to 309 residues: Acetylglutamate kinase (309 aa).

Substrate is bound by residues 82 to 83 (GG), arginine 104, and asparagine 206.

Belongs to the acetylglutamate kinase family. ArgB subfamily.

The protein resides in the cytoplasm. It catalyses the reaction N-acetyl-L-glutamate + ATP = N-acetyl-L-glutamyl 5-phosphate + ADP. It participates in amino-acid biosynthesis; L-arginine biosynthesis; N(2)-acetyl-L-ornithine from L-glutamate: step 2/4. Functionally, catalyzes the ATP-dependent phosphorylation of N-acetyl-L-glutamate. The polypeptide is Acetylglutamate kinase (Cupriavidus pinatubonensis (strain JMP 134 / LMG 1197) (Cupriavidus necator (strain JMP 134))).